Consider the following 934-residue polypeptide: MITGLLKKIFGSRNERLIKQYRRKVVQINALEPTFEALSDAELQAKTQAFRERFAKGETLDALLPEAFAVCREASKRVMKMRHFDVQLIGGMVLHDGKIAEMRTGEGKTLTATLAVYLNAIAGLGVHVVTVNDYLAQRDAEWMGKLYNWLGLSVGVNLTTMAHDEKQAAYAADITYGTNNEFGFDYLRDNMVYDDSQRVQRPLNYAIVDEVDSILIDEARTPLIISGQAEDHTDLYRRMNSIPPLLTRQIGEEKADGTGVEKPGDYYVDEKSHQVYLTEAGHEKAEQILLQAGLLAEGESLYAPQNITLMHHLYASLRAHSLFHRDQHYVVQGDEVIIVDEFTGRLMQGRRWSDGLHQAVEAKEGVQIQQENQTLATITFQNYFRMYAKLAGMTGTADTEAYEFQEIYGLETVVIPTNRQAQRKDLQDQIYKTSKERYDAVIRDIRDCFERGQPVLVGTTSIENSELLSHLLNQAQLPHQVLNAKQHAREAEIVAQAGRPKMVTIATNMAGRGTDIVLGGNVEKQAGFVMADESLSDEEKARRVTQLQDEWQSLHEQVKAAGGLHIVGTERHESRRIDNQLRGRAGRQGDPGSSRFYLSLDDQLLRIFAGDRVRAIMDRLKMPEGEPIEAGIVTRSIESAQRKVEGRNFDIRKQLLQYDDVANDQRREIYKLRNEILEAVDAGDLVKNLRESVFVELFRAYVPAESMEEQWDLAGLEKTLRDDWGVEVPLVKTVEQAQSIEDEELLTQVQEAVEAVYAGKVAQVGRESFAGFERSVMLQSLDTHWREHLAALDHLRQGIHLRGYAQKDPKQEYKRESFELFGRLLDNIRNEVTRIIFTVRIQSQAELEEASEQIEEDLSQLTNVQYKHDEFSELAEVAAGDAEIHGETPPVPAHRSAAASAAAALAGQVPKVGRNDPCPCGSGKKYKQCHGKLA.

ATP contacts are provided by residues Q87, 105 to 109, and D515; that span reads GEGKT. Residues C918, C920, C929, and H930 each contribute to the Zn(2+) site.

Belongs to the SecA family. As to quaternary structure, monomer and homodimer. Part of the essential Sec protein translocation apparatus which comprises SecA, SecYEG and auxiliary proteins SecDF-YajC and YidC. The cofactor is Zn(2+).

The protein resides in the cell inner membrane. It is found in the cytoplasm. The catalysed reaction is ATP + H2O + cellular proteinSide 1 = ADP + phosphate + cellular proteinSide 2.. Its function is as follows. Part of the Sec protein translocase complex. Interacts with the SecYEG preprotein conducting channel. Has a central role in coupling the hydrolysis of ATP to the transfer of proteins into and across the cell membrane, serving both as a receptor for the preprotein-SecB complex and as an ATP-driven molecular motor driving the stepwise translocation of polypeptide chains across the membrane. The sequence is that of Protein translocase subunit SecA from Ralstonia nicotianae (strain ATCC BAA-1114 / GMI1000) (Ralstonia solanacearum).